The primary structure comprises 69 residues: Putative membrane protein insertion efficiency factor (69 aa).

This sequence belongs to the UPF0161 family.

It localises to the cell inner membrane. In terms of biological role, could be involved in insertion of integral membrane proteins into the membrane. This chain is Putative membrane protein insertion efficiency factor, found in Laribacter hongkongensis (strain HLHK9).